The following is a 180-amino-acid chain: Peroxisome assembly protein 22 (180 aa).

Residues 15–32 (LGIVGTAIAVLVTSYYIY) form a helical membrane-spanning segment.

It belongs to the peroxin-22 family.

Its subcellular location is the peroxisome membrane. Involved in peroxisome biogenesis. The sequence is that of Peroxisome assembly protein 22 (PEX22) from Saccharomyces cerevisiae (strain ATCC 204508 / S288c) (Baker's yeast).